We begin with the raw amino-acid sequence, 547 residues long: CTP synthase (547 aa).

Positions 1–269 (MKTKFIFVTG…DQKVAIMLRL (269 aa)) are amidoligase domain. S14 is a binding site for CTP. S14 serves as a coordination point for UTP. ATP is bound by residues 15–20 (SLGKGL) and D72. Residues D72 and E143 each contribute to the Mg(2+) site. CTP is bound by residues 150-152 (DIE), 190-195 (KTKPTQ), and K226. UTP contacts are provided by residues 190-195 (KTKPTQ) and K226. A Glutamine amidotransferase type-1 domain is found at 294-547 (TVAIVGKYVD…IGAAKKHAKV (254 aa)). G356 contacts L-glutamine. C383 serves as the catalytic Nucleophile; for glutamine hydrolysis. L-glutamine-binding positions include 384 to 387 (LGMQ), E407, and R475. Catalysis depends on residues H520 and E522.

It belongs to the CTP synthase family. Homotetramer.

The enzyme catalyses UTP + L-glutamine + ATP + H2O = CTP + L-glutamate + ADP + phosphate + 2 H(+). It carries out the reaction L-glutamine + H2O = L-glutamate + NH4(+). The catalysed reaction is UTP + NH4(+) + ATP = CTP + ADP + phosphate + 2 H(+). It functions in the pathway pyrimidine metabolism; CTP biosynthesis via de novo pathway; CTP from UDP: step 2/2. Its activity is regulated as follows. Allosterically activated by GTP, when glutamine is the substrate; GTP has no effect on the reaction when ammonia is the substrate. The allosteric effector GTP functions by stabilizing the protein conformation that binds the tetrahedral intermediate(s) formed during glutamine hydrolysis. Inhibited by the product CTP, via allosteric rather than competitive inhibition. Catalyzes the ATP-dependent amination of UTP to CTP with either L-glutamine or ammonia as the source of nitrogen. Regulates intracellular CTP levels through interactions with the four ribonucleotide triphosphates. This is CTP synthase from Desulfovibrio desulfuricans (strain ATCC 27774 / DSM 6949 / MB).